A 483-amino-acid chain; its full sequence is ATP-dependent protease ATPase subunit HslU (483 aa).

ATP-binding positions include Val18 and 60 to 65; that span reads GVGKTE. Low complexity-rich tracts occupy residues 136-147 and 171-181; these read LPGGAPQPAPAQ and AQADASQASPP. The disordered stretch occupies residues 136–212; that stretch reads LPGGAPQPAP…HGGKLDDREV (77 aa). A compositionally biased stretch (polar residues) spans 182–191; the sequence is TGTGSAPDSR. Basic and acidic residues predominate over residues 192-209; the sequence is SSTREKLRTLWHGGKLDD. The ATP site is built by Asp296, Glu361, and Arg433.

This sequence belongs to the ClpX chaperone family. HslU subfamily. A double ring-shaped homohexamer of HslV is capped on each side by a ring-shaped HslU homohexamer. The assembly of the HslU/HslV complex is dependent on binding of ATP.

It is found in the cytoplasm. ATPase subunit of a proteasome-like degradation complex; this subunit has chaperone activity. The binding of ATP and its subsequent hydrolysis by HslU are essential for unfolding of protein substrates subsequently hydrolyzed by HslV. HslU recognizes the N-terminal part of its protein substrates and unfolds these before they are guided to HslV for hydrolysis. This Nitratidesulfovibrio vulgaris (strain DSM 19637 / Miyazaki F) (Desulfovibrio vulgaris) protein is ATP-dependent protease ATPase subunit HslU.